A 345-amino-acid polypeptide reads, in one-letter code: tRNA N6-adenosine threonylcarbamoyltransferase (345 aa).

Residues histidine 109 and histidine 113 each coordinate Fe cation. Substrate-binding positions include 136–140 (TVSGG), aspartate 169, glycine 182, aspartate 186, and asparagine 284. Position 312 (aspartate 312) interacts with Fe cation.

Belongs to the KAE1 / TsaD family. It depends on Fe(2+) as a cofactor.

It localises to the cytoplasm. The catalysed reaction is L-threonylcarbamoyladenylate + adenosine(37) in tRNA = N(6)-L-threonylcarbamoyladenosine(37) in tRNA + AMP + H(+). In terms of biological role, required for the formation of a threonylcarbamoyl group on adenosine at position 37 (t(6)A37) in tRNAs that read codons beginning with adenine. Is involved in the transfer of the threonylcarbamoyl moiety of threonylcarbamoyl-AMP (TC-AMP) to the N6 group of A37, together with TsaE and TsaB. TsaD likely plays a direct catalytic role in this reaction. This is tRNA N6-adenosine threonylcarbamoyltransferase from Chlorobium phaeovibrioides (strain DSM 265 / 1930) (Prosthecochloris vibrioformis (strain DSM 265)).